A 237-amino-acid polypeptide reads, in one-letter code: uncharacterized protein (237 aa).

Residues 3–116 form the Response regulatory domain; sequence RILLVEDDER…VVMAKIKSVL (114 aa). Aspartate 52 bears the 4-aspartylphosphate mark. A DNA-binding region (ompR/PhoB-type) is located at residues 131-229; it reads SRIVELGGLT…IRGQGYQFQV (99 aa).

In terms of processing, phosphorylated by YvcQ.

It localises to the cytoplasm. Member of the two-component regulatory system YvcQ/YvcP. This is an uncharacterized protein from Bacillus subtilis (strain 168).